Here is a 450-residue protein sequence, read N- to C-terminus: Chromosomal replication initiator protein DnaA (450 aa).

The segment at 1 to 79 is domain I, interacts with DnaA modulators; it reads MKDSYFDLNT…MEYAYDVAHD (79 aa). A domain II region spans residues 79–112; the sequence is DFFKPELKVIKVVANPVNNQKSNQSNSDFVATDY. Residues 113–329 form a domain III, AAA+ region region; that stretch reads QLNQNFTFDT…GAFNTLTLMA (217 aa). Residues Gly-157, Gly-159, Lys-160, and Thr-161 each coordinate ATP. The interval 330-450 is domain IV, binds dsDNA; sequence RAGRPINVSN…NLSTKIKEKS (121 aa).

This sequence belongs to the DnaA family. Oligomerizes as a right-handed, spiral filament on DNA at oriC.

It localises to the cytoplasm. In terms of biological role, plays an essential role in the initiation and regulation of chromosomal replication. ATP-DnaA binds to the origin of replication (oriC) to initiate formation of the DNA replication initiation complex once per cell cycle. Binds the DnaA box (a 9 base pair repeat at the origin) and separates the double-stranded (ds)DNA. Forms a right-handed helical filament on oriC DNA; dsDNA binds to the exterior of the filament while single-stranded (ss)DNA is stabiized in the filament's interior. The ATP-DnaA-oriC complex binds and stabilizes one strand of the AT-rich DNA unwinding element (DUE), permitting loading of DNA polymerase. After initiation quickly degrades to an ADP-DnaA complex that is not apt for DNA replication. Binds acidic phospholipids. This chain is Chromosomal replication initiator protein DnaA, found in Oenococcus oeni (strain ATCC BAA-331 / PSU-1).